The primary structure comprises 608 residues: Protein FAM151A (608 aa).

The chain crosses the membrane as a helical span at residues 14 to 34 (WILAGSVTVTLVLAISLILGL). Residues 586-596 (VSSNRPSSRIG) show a composition bias toward polar residues. The interval 586 to 608 (VSSNRPSSRIGPSSVEGFPGESR) is disordered.

The protein belongs to the menorin family.

The protein localises to the membrane. This Mus musculus (Mouse) protein is Protein FAM151A (Fam151a).